Consider the following 208-residue polypeptide: Uracil phosphoribosyltransferase (208 aa).

Residues R78, R103, and 130 to 138 (DPMLATGGS) each bind 5-phospho-alpha-D-ribose 1-diphosphate. Residues I193 and 198–200 (GDA) each bind uracil. A 5-phospho-alpha-D-ribose 1-diphosphate-binding site is contributed by D199.

It belongs to the UPRTase family. It depends on Mg(2+) as a cofactor.

It catalyses the reaction UMP + diphosphate = 5-phospho-alpha-D-ribose 1-diphosphate + uracil. It participates in pyrimidine metabolism; UMP biosynthesis via salvage pathway; UMP from uracil: step 1/1. Allosterically activated by GTP. Functionally, catalyzes the conversion of uracil and 5-phospho-alpha-D-ribose 1-diphosphate (PRPP) to UMP and diphosphate. This Shewanella denitrificans (strain OS217 / ATCC BAA-1090 / DSM 15013) protein is Uracil phosphoribosyltransferase.